The chain runs to 537 residues: Probable sterol O-acyltransferase 1 (537 aa).

The next 4 membrane-spanning stretches (helical) occupy residues 98 to 118, 140 to 160, 174 to 194, and 199 to 219; these read FRGF…QLYA, FFVL…SYGL, LGYT…VYWV, and FPIV…MKQF. An N-linked (GlcNAc...) asparagine glycan is attached at N250. 2 consecutive transmembrane segments (helical) span residues 344–364 and 384–404; these read FGLL…SAVA and IMFP…DCIL. The FYXDWWN motif motif lies at 418–424; the sequence is FYGAWWN. Helical transmembrane passes span 462-482 and 517-537; these read AVLL…LLAT and VFFW…YIVF. Residue H474 is part of the active site.

This sequence belongs to the membrane-bound acyltransferase family. Sterol o-acyltransferase subfamily.

The protein resides in the endoplasmic reticulum membrane. Functionally, sterol O-acyltransferase that catalyzes the formation of stery esters. The chain is Probable sterol O-acyltransferase 1 (are1) from Schizosaccharomyces pombe (strain 972 / ATCC 24843) (Fission yeast).